Here is a 582-residue protein sequence, read N- to C-terminus: Histone deacetylase 9-B (582 aa).

The segment at 146–195 (SNEVKQKLQEFLLSKSTKDITLNGIPQKITQSSKLWYTASHHTSLEQSSP) is interaction with mef2. Positions 189–205 (SLEQSSPPLGGASSSCK) are enriched in polar residues. Disordered regions lie at residues 189 to 254 (SLEQ…KEGN), 270 to 314 (TASS…QSRL), 409 to 447 (LSSG…RTQS), and 496 to 567 (VHLQ…NQSS). 2 stretches are compositionally biased toward basic and acidic residues: residues 213–224 (DYRDDFPLRKTV) and 238–253 (KVAE…RKEG). Low complexity predominate over residues 270–289 (TASSSAPGSGPSSPNGACSA). Polar residues predominate over residues 295–314 (GPSSLPVTTRTERWPSQSRL).

It belongs to the histone deacetylase family. HD type 2 subfamily. As to quaternary structure, homodimer. Interacts with mef2.

It is found in the nucleus. The catalysed reaction is N(6)-acetyl-L-lysyl-[histone] + H2O = L-lysyl-[histone] + acetate. Devoided of intrinsic deacetylase activity, promotes the deacetylation of lysine residues on the N-terminal part of the core histones (H2A, H2B, H3 and H4) by recruiting other histone deacetylases. Histone deacetylation gives a tag for epigenetic repression and plays an important role in transcriptional regulation, cell cycle progression and developmental events. Represses MEF2-dependent transcription. The protein is Histone deacetylase 9-B (hdac9b) of Danio rerio (Zebrafish).